Here is a 264-residue protein sequence, read N- to C-terminus: Thymidylate synthase (264 aa).

Arg-21 provides a ligand contact to dUMP. His-51 is a (6R)-5,10-methylene-5,6,7,8-tetrahydrofolate binding site. 126–127 (RR) lines the dUMP pocket. The Nucleophile role is filled by Cys-146. DUMP is bound by residues 166 to 169 (RSAD), Asn-177, and 207 to 209 (HIY). Asp-169 provides a ligand contact to (6R)-5,10-methylene-5,6,7,8-tetrahydrofolate. Ser-263 is a (6R)-5,10-methylene-5,6,7,8-tetrahydrofolate binding site.

Belongs to the thymidylate synthase family. Bacterial-type ThyA subfamily. In terms of assembly, homodimer.

It is found in the cytoplasm. The catalysed reaction is dUMP + (6R)-5,10-methylene-5,6,7,8-tetrahydrofolate = 7,8-dihydrofolate + dTMP. It participates in pyrimidine metabolism; dTTP biosynthesis. Its function is as follows. Catalyzes the reductive methylation of 2'-deoxyuridine-5'-monophosphate (dUMP) to 2'-deoxythymidine-5'-monophosphate (dTMP) while utilizing 5,10-methylenetetrahydrofolate (mTHF) as the methyl donor and reductant in the reaction, yielding dihydrofolate (DHF) as a by-product. This enzymatic reaction provides an intracellular de novo source of dTMP, an essential precursor for DNA biosynthesis. The polypeptide is Thymidylate synthase (Halalkalibacterium halodurans (strain ATCC BAA-125 / DSM 18197 / FERM 7344 / JCM 9153 / C-125) (Bacillus halodurans)).